The primary structure comprises 581 residues: Zinc finger protein 319 (581 aa).

Low complexity predominate over residues 1–22 (MSESWQQPPQTQPQQPQAPQPQ). The disordered stretch occupies residues 1 to 39 (MSESWQQPPQTQPQQPQAPQPQHHAETPPALAEHTLPPG). A C2H2-type 1 zinc finger spans residues 75-99 (PKCGVCGHDLAHLSSPHEHQCLAGH). The C2H2-type 2; degenerate zinc finger occupies 103–125 (FQCTQCLKIFHQATDLLEHQCVQ). Lysine 129 participates in a covalent cross-link: Glycyl lysine isopeptide (Lys-Gly) (interchain with G-Cter in SUMO2). 4 consecutive C2H2-type zinc fingers follow at residues 131-153 (FVCG…HSSH), 201-223 (YSCP…ERIH), 229-251 (YKCT…KRTH), and 257-279 (YKCA…MYAH). Position 280 is a phosphoserine (serine 280). The segment at 286 to 308 (FRCNVCELHFKESSELLQHPCTP) adopts a C2H2-type 7; degenerate zinc-finger fold. 3 C2H2-type zinc fingers span residues 314–336 (FRCG…ERTH), 342–364 (FKCD…RRTH), and 370–392 (FKCG…QHVH). Residues 398–420 (FKCPVCQKGFDQSAELLRHKCLP) form a C2H2-type 11; degenerate zinc finger. The C2H2-type 12 zinc-finger motif lies at 427 to 449 (FKCPVCNKAYKRASALQKHQLSH). The segment at 457-479 (LRCTLCERRFFSSSEFVQHRCDP) adopts a C2H2-type 13; degenerate zinc-finger fold. C2H2-type zinc fingers lie at residues 485–507 (LKCP…RRVH), 513–535 (YKCP…QGVH), and 541–563 (FKCV…SAQH).

Belongs to the krueppel C2H2-type zinc-finger protein family.

It is found in the nucleus. In terms of biological role, may be involved in transcriptional regulation. The chain is Zinc finger protein 319 (Znf319) from Mus musculus (Mouse).